Consider the following 352-residue polypeptide: Endophilin-A1 (352 aa).

Residues 1–21 (MSVAGLKKQFHKATQKVSEKV) are membrane-binding amphipathic helix. Positions 1–27 (MSVAGLKKQFHKATQKVSEKVGGAEGT) are disordered. Residues 1 to 125 (MSVAGLKKQF…EVGEAMRELS (125 aa)) form a binds and tubulates liposomes region. Residues 18–249 (SEKVGGAEGT…LEERIRQASS (232 aa)) form the BAR domain. Residues 60 to 87 (PNPASRAKLSMINTMSKIRGQEKGPGYP) are required for dimerization upon membrane association. Residues 181-248 (EELRQALEKF…RLEERIRQAS (68 aa)) are a coiled coil. Serine 262 bears the Phosphoserine mark. A disordered region spans residues 264-289 (EFATGDSTQPNGGLSHTGTPKPPGVQ). Over residues 268–281 (GDSTQPNGGLSHTG) the composition is skewed to polar residues. The SH3 domain maps to 290–349 (MDQPCCRALYDFEPENEGELGFKEGDIITLTNQIDENWYEGMLHGQSGFFPINYVEILVA). Tyrosine 299 carries the phosphotyrosine modification.

This sequence belongs to the endophilin family. In terms of assembly, monomer; in cytoplasm. Homodimer; when associated with membranes. Interacts with SYNJ1. Interacts with DNM1. Interacts with MAP4K3; the interaction appears to regulate MAP4K3-mediated JNK activation. Interacts with OPHN1. Interacts with PDCD6IP. Interacts with BIN2. Interacts with ATXN2. Interacts with ADAM9 and ADAM15 cytoplasmic tails. Interacts with TMEM108. Interacts with ADGRB2.

It is found in the cytoplasm. The protein localises to the membrane. Its subcellular location is the early endosome. It localises to the presynapse. Functionally, implicated in synaptic vesicle endocytosis. May recruit other proteins to membranes with high curvature. Required for BDNF-dependent dendrite outgrowth. Cooperates with SH3GL2 to mediate BDNF-NTRK2 early endocytic trafficking and signaling from early endosomes. In Mus musculus (Mouse), this protein is Endophilin-A1 (Sh3gl2).